A 1579-amino-acid polypeptide reads, in one-letter code: MAP kinase kinase kinase SSK2 (1579 aa).

The segment at Met-1–Asn-70 is disordered. The span at Ser-21–Ser-44 shows a compositional bias: low complexity. Positions Asn-45–Arg-67 are enriched in polar residues. 4 positions are modified to phosphoserine: Ser-57, Ser-62, Ser-78, and Ser-118. 2 disordered regions span residues Phe-97–Ile-155 and Ser-190–Thr-243. The span at Ser-104 to Ser-118 shows a compositional bias: low complexity. The span at Asn-127–Pro-139 shows a compositional bias: polar residues. Positions Lys-144 to Ile-155 are enriched in basic and acidic residues. Position 290 is a phosphoserine (Ser-290). The Protein kinase domain maps to Trp-1266–Ile-1558. ATP is bound by residues Ile-1272–Val-1280 and Lys-1295. The active-site Proton acceptor is Asp-1390. At Ser-1424 the chain carries Phosphoserine.

This sequence belongs to the protein kinase superfamily. STE Ser/Thr protein kinase family. MAP kinase kinase kinase subfamily. Interacts with by SSK1.

The catalysed reaction is L-seryl-[protein] + ATP = O-phospho-L-seryl-[protein] + ADP + H(+). It carries out the reaction L-threonyl-[protein] + ATP = O-phospho-L-threonyl-[protein] + ADP + H(+). In terms of biological role, kinase involved in a signal transduction pathway that is activated by changes in the osmolarity of the extracellular environment. Activates the PBS2 MAP kinase kinase by phosphorylation. This chain is MAP kinase kinase kinase SSK2 (SSK2), found in Saccharomyces cerevisiae (strain ATCC 204508 / S288c) (Baker's yeast).